Here is an 84-residue protein sequence, read N- to C-terminus: MFSLKLFVVFLAVCICVSQAVSYTDCTESGQNYCLCVGSNVCGEGKNCQLSSSGNQCVHGEGTPKPKSQTEGDFEEIPDEDILN.

An N-terminal signal peptide occupies residues 1-20 (MFSLKLFVVFLAVCICVSQA). The tract at residues 21–23 (VSY) is interaction with thrombin active site. 3 cysteine pairs are disulfide-bonded: Cys-26-Cys-34, Cys-36-Cys-48, and Cys-42-Cys-57. Positions 53 to 84 (SGNQCVHGEGTPKPKSQTEGDFEEIPDEDILN) are disordered. A glycan (O-linked (GalNAc...) threonine) is linked at Thr-63. Acidic residues predominate over residues 72–84 (GDFEEIPDEDILN). The interval 73 to 84 (DFEEIPDEDILN) is interaction with fibrinogen-binding exosite of thrombin.

It belongs to the protease inhibitor I14 (hirudin) family.

The protein localises to the secreted. Hirudin is a potent thrombin-specific protease inhibitor. It forms a stable non-covalent complex with alpha-thrombin, thereby abolishing its ability to cleave fibrinogen. This chain is Hirudin-HM2, found in Hirudinaria manillensis (Asian medical leech).